We begin with the raw amino-acid sequence, 352 residues long: Membrane progestin receptor alpha (352 aa).

Topologically, residues 1–75 (MATVVMEQIG…FLTLFQRHNE (75 aa)) are cytoplasmic. A helical membrane pass occupies residues 76–96 (TLNVWTHLLAAFIILVKWQEI). Residues 97–110 (SETVDFLRDPHAQP) are Extracellular-facing. A helical transmembrane segment spans residues 111–131 (LFIVLLAAFTYLSFSALAHLL). Residues 132 to 139 (SAKSELSY) lie on the Cytoplasmic side of the membrane. Residues 140–160 (YTFYFLDYVGVAVYQYGSALA) traverse the membrane as a helical segment. The Extracellular segment spans residues 161-175 (HYYYAIEKEWHTKVQ). Residues 176–196 (GLFLPAAAFLAWLTCFGCCYG) form a helical membrane-spanning segment. The Cytoplasmic segment spans residues 197–242 (KYASPELPKVANKLFQVVPSALAYCLDISPVVHRIYSCYQEGCSDP). Residues 243-263 (VVAYHFYHVVFFLIGAYFFCC) form a helical membrane-spanning segment. At 264 to 275 (PHPESLFPGKCD) the chain is on the extracellular side. The helical transmembrane segment at 276–296 (FIGQGHQLFHVFVVVCTLTQV) threads the bilayer. The Cytoplasmic portion of the chain corresponds to 297–316 (EALRTDFTERRPFYERLHGD). Residues 317–337 (LAHDAVALFIFTACCSALTAF) form a helical membrane-spanning segment. The Extracellular portion of the chain corresponds to 338-352 (YVRQRVRASLHEKGE).

This sequence belongs to the ADIPOR family. As to expression, strongly expressed in ovary and brain; lower expression in testis and pituitary. Not detected in heart, kidney, spleen, intestine, gill and muscle.

The protein resides in the cell membrane. In terms of biological role, steroid membrane receptor. Binds progesterone, progestin and 17-hydroxyprogesterone in vitro. Capable of mediating progestin-induced oocyte maturation. The chain is Membrane progestin receptor alpha (mpra) from Cynoscion nebulosus (Spotted seatrout).